A 590-amino-acid chain; its full sequence is DNA mismatch repair protein MutL (590 aa).

The protein belongs to the DNA mismatch repair MutL/HexB family.

Functionally, this protein is involved in the repair of mismatches in DNA. It is required for dam-dependent methyl-directed DNA mismatch repair. May act as a 'molecular matchmaker', a protein that promotes the formation of a stable complex between two or more DNA-binding proteins in an ATP-dependent manner without itself being part of a final effector complex. This Caldanaerobacter subterraneus subsp. tengcongensis (strain DSM 15242 / JCM 11007 / NBRC 100824 / MB4) (Thermoanaerobacter tengcongensis) protein is DNA mismatch repair protein MutL.